A 393-amino-acid polypeptide reads, in one-letter code: MVSVAEIRKAQRAEGPATVLAIGTATPANCVYQADYPDYYFRITNSEHMTELKEKFKRMCEKSMINKRYMHLTEEILKENPNVCAYMAPSLDARQDMVVVEVPKLGKEAAAKAIKEWGQPKSKITHLVFCTTSGVDMPGADYQLTKLLGLKPSVKRLMMYQQGCFAGGTVLRLAKDLAENNAGSRVLVVCSEITAVTFRGPSDTHLDSLVGQALFGDGAAAVIIGADPDTKIELPLFELVSAAQTILPDSEGAIDGHLREVGLTFHLLKDVPGLISKNIEKSLVEAFTPIGISDWNSLFWIAHPGGPAILDQVELKLGLKEEKLRATRHVLSEYGNMSSACVLFILDEMRKKSIEEGKGSTGEGLEWGVLFGFGPGLTVETVVLHSVSAPAAH.

C164 is a catalytic residue.

It belongs to the thiolase-like superfamily. Chalcone/stilbene synthases family.

The catalysed reaction is (E)-4-coumaroyl-CoA + 3 malonyl-CoA + 3 H(+) = 2',4,4',6'-tetrahydroxychalcone + 3 CO2 + 4 CoA. The protein operates within secondary metabolite biosynthesis; flavonoid biosynthesis. Functionally, the primary product of this enzyme is 4,2',4',6'-tetrahydroxychalcone (also termed naringenin-chalcone or chalcone) which can under specific conditions spontaneously isomerize into naringenin. The chain is Chalcone synthase (CHS) from Vitis vinifera (Grape).